Here is a 420-residue protein sequence, read N- to C-terminus: MAP kinase-interacting serine/threonine-protein kinase 1 (420 aa).

The interval methionine 1–threonine 25 is disordered. At serine 27 the chain carries Phosphoserine; by PAK2. The Protein kinase domain maps to lysine 37–valine 321. ATP is bound by residues leucine 43–valine 51 and lysine 66. Catalysis depends on aspartate 158, which acts as the Proton acceptor. Phosphoserine is present on residues serine 168 and serine 173. A phosphothreonine mark is found at threonine 197, threonine 202, and threonine 332. The segment at leucine 386–proline 420 is disordered. The segment covering leucine 400 to alanine 409 has biased composition (low complexity). A compositionally biased stretch (pro residues) spans proline 410–proline 420.

It belongs to the protein kinase superfamily. CAMK Ser/Thr protein kinase family. As to quaternary structure, interacts with the C-terminal regions of EIF4G1 and EIF4G2. Also binds to dephosphorylated ERK1 and ERK2, and to the p38 kinases. The cofactor is Mg(2+). In terms of processing, dual phosphorylation of Thr-197 and Thr-202 activates the kinase. Phosphorylation of Thr-332 activates the kinase. MAPK3/ERK1 is one of the kinases which activate MKNK1/MNK1. Phosphorylation by PAK2 leads to a reduced phosphorylation of EIF4G1.

The catalysed reaction is L-seryl-[protein] + ATP = O-phospho-L-seryl-[protein] + ADP + H(+). The enzyme catalyses L-threonyl-[protein] + ATP = O-phospho-L-threonyl-[protein] + ADP + H(+). With respect to regulation, phosphorylated and activated by the p38 kinases and kinases in the Erk pathway. Functionally, may play a role in the response to environmental stress and cytokines. Appears to regulate translation by phosphorylating EIF4E, thus increasing the affinity of this protein for the 7-methylguanosine-containing mRNA cap. In Bos taurus (Bovine), this protein is MAP kinase-interacting serine/threonine-protein kinase 1 (MKNK1).